The primary structure comprises 112 residues: Large ribosomal subunit protein P2 (112 aa).

Residues 69–85 (AGGAAMPAAAAGGAPAA) are compositionally biased toward low complexity. The interval 69 to 112 (AGGAAMPAAAAGGAPAAAEDKAEAKKPEAEPEEEEDDMGFSLFD) is disordered. The span at 86-97 (AEDKAEAKKPEA) shows a compositional bias: basic and acidic residues.

Belongs to the eukaryotic ribosomal protein P1/P2 family. As to quaternary structure, P1 and P2 exist as dimers at the large ribosomal subunit. In terms of processing, phosphorylated.

In terms of biological role, plays an important role in the elongation step of protein synthesis. The chain is Large ribosomal subunit protein P2 from Babesia bovis.